We begin with the raw amino-acid sequence, 306 residues long: Esterase tropF (306 aa).

Active-site charge relay system residues include Ser-147, Asp-248, and His-276.

The protein belongs to the LovG family.

The protein operates within secondary metabolite biosynthesis. Its function is as follows. Esterase; part of the gene cluster that mediates the biosynthesis of the tropolone class of fungal maleic anhydrides. The pathway begins with the synthesis of 3-methylorcinaldehyde by the non-reducing polyketide synthase (PKS) tropA. 3-methylorcinaldehyde is the substrate for the FAD-dependent monooxygenase tropB to yield a dearomatized hydroxycyclohexadione. The 2-oxoglutarate-dependent dioxygenase tropC then performs the oxidative ring expansion to provide the first tropolone metabolite stipitaldehyde. Trop D converts stipitaldehyde into stipitacetal which is in turn converted to stipitalide by the short-chain dehydrogenase/reductase tropE. The next steps involve tropF, tropG, tropH, tropI and tropJ to form successive tropolone maleic anhydrides including stipitaldehydic, stipitatonic and stipitatic acids. The chain is Esterase tropF from Talaromyces stipitatus (strain ATCC 10500 / CBS 375.48 / QM 6759 / NRRL 1006) (Penicillium stipitatum).